A 500-amino-acid polypeptide reads, in one-letter code: MRKRSRKVKNDLVVLESKEKKVGMWGIFALILIVFGFIIAPLLPGIFDNAHSSGLKFGSYKGQPIYYKKDSKFAKYVNYYSNLYSRLQGNAKNINTDYNAWYLAFMKYVEDVAFLDLVKKYNFYISKEMLNKNLLKSPEYLDSSGNFSSKRYNKASDYQKVKIYDDMVENILFSNVKIFLNSNLIFPDSLFDMIKNMSTVERHISYLSLSYQDFSNKEVISYAEKNLNLFKRLSLASIRFKNMNDARTAHDKLLNKTPFEELAKLYSDDIANFKGVVSLDKYYFDLDLNVEKKEDLNSIFSLREGEFSKPIKIKNKNEYQIYKAFSNVHDFDKNSDRDISSVKNYIETYEPSVIEGYLENKLSDFLGDVKFSSLSQVLEKYQLSLKEEIVNLSYNINVYPNTLKELVEFNNSKSFYDIIFGLKENSWSKPFVANKKVYLFFLNSVKKRSNQLKDEIKNEKILDNFNIANSGLITDFLLNKKDFVNNFNESFFALQNFSQN.

A helical membrane pass occupies residues 27-47 (IFALILIVFGFIIAPLLPGIF).

It is found in the membrane. This is an uncharacterized protein from Borreliella burgdorferi (strain ATCC 35210 / DSM 4680 / CIP 102532 / B31) (Borrelia burgdorferi).